The chain runs to 519 residues: ATP synthase subunit beta (519 aa).

Residues 1–26 (MAKAATPKRAPARAAAIPAAATPAAK) are compositionally biased toward low complexity. The interval 1–40 (MAKAATPKRAPARAAAIPAAATPAAKPAKRASTRSAAARS) is disordered. 197–204 (GGAGVGKT) contacts ATP.

Belongs to the ATPase alpha/beta chains family. In terms of assembly, F-type ATPases have 2 components, CF(1) - the catalytic core - and CF(0) - the membrane proton channel. CF(1) has five subunits: alpha(3), beta(3), gamma(1), delta(1), epsilon(1). CF(0) has three main subunits: a(1), b(2) and c(9-12). The alpha and beta chains form an alternating ring which encloses part of the gamma chain. CF(1) is attached to CF(0) by a central stalk formed by the gamma and epsilon chains, while a peripheral stalk is formed by the delta and b chains.

The protein resides in the cell inner membrane. It carries out the reaction ATP + H2O + 4 H(+)(in) = ADP + phosphate + 5 H(+)(out). In terms of biological role, produces ATP from ADP in the presence of a proton gradient across the membrane. The catalytic sites are hosted primarily by the beta subunits. The polypeptide is ATP synthase subunit beta (Chelativorans sp. (strain BNC1)).